The primary structure comprises 498 residues: 3-octaprenyl-4-hydroxybenzoate carboxy-lyase (498 aa).

Asn176 lines the Mn(2+) pocket. Prenylated FMN contacts are provided by residues 179 to 181, 193 to 195, and 198 to 199; these read IYR, RWL, and RG. Residue Glu242 coordinates Mn(2+). Residue Asp291 is the Proton donor of the active site.

It belongs to the UbiD family. In terms of assembly, homohexamer. Prenylated FMN is required as a cofactor. Requires Mn(2+) as cofactor.

Its subcellular location is the cell membrane. The enzyme catalyses a 4-hydroxy-3-(all-trans-polyprenyl)benzoate + H(+) = a 2-(all-trans-polyprenyl)phenol + CO2. It participates in cofactor biosynthesis; ubiquinone biosynthesis. Functionally, catalyzes the decarboxylation of 3-octaprenyl-4-hydroxy benzoate to 2-octaprenylphenol, an intermediate step in ubiquinone biosynthesis. This chain is 3-octaprenyl-4-hydroxybenzoate carboxy-lyase, found in Escherichia coli O6:K15:H31 (strain 536 / UPEC).